A 1079-amino-acid polypeptide reads, in one-letter code: Adhesion G-protein coupled receptor F3 (1079 aa).

Positions 1 to 25 (MVCSAAPLLLLATTLPLLGSPVAQA) are cleaved as a signal peptide. Residues 26–775 (SQPVSETGVR…EEPALALLTQ (750 aa)) are Extracellular-facing. Residues asparagine 188, asparagine 264, asparagine 301, asparagine 382, asparagine 441, and asparagine 648 are each glycosylated (N-linked (GlcNAc...) asparagine). The region spanning 599-765 (HPFAFSLPNV…SVLMSPHTVP (167 aa)) is the GAIN-B domain. 2 disulfides stabilise this stretch: cysteine 715–cysteine 747 and cysteine 734–cysteine 749. The interval 715–765 (CVFWDHSLFQGRGGWSKEGCQAQVASASPTAQCLCQHLTAFSVLMSPHTVP) is GPS. Residues 776 to 796 (VGLGASILALLVCLGVYWLVW) form a helical membrane-spanning segment. At 797-811 (RVVVRNKISYFRHAA) the chain is on the cytoplasmic side. A helical membrane pass occupies residues 812–832 (LLNMVFCLLAADTCFLGAPFL). The Extracellular segment spans residues 833–851 (SPGPRSPLCLAAAFLCHFL). The chain crosses the membrane as a helical span at residues 852 to 874 (YLATFFWMLAQALVLAHQLLFVF). The Cytoplasmic segment spans residues 875-881 (HQLAKHR). The helical transmembrane segment at 882–902 (VLPLMVLLGYLCPLGLAGVTL) threads the bilayer. Residues 903-928 (GLYLPQGQYLREGECWLDGKGGALYT) are Extracellular-facing. A helical transmembrane segment spans residues 929–949 (FVGPVLAIIGVNGLVLAMAML). At 950 to 973 (KLLRPSLSEGPPAEKRQALLGVIK) the chain is on the cytoplasmic side. Residues 974–994 (ALLILTPIFGLTWGLGLATLL) form a helical membrane-spanning segment. At 995–1002 (EEVSTVPH) the chain is on the extracellular side. Residues 1003–1023 (YIFTILNTLQGVFILLFGCLM) form a helical membrane-spanning segment. The Cytoplasmic segment spans residues 1024 to 1079 (DRKIQEALRKRFCRAQAPSSTISLVSCCLQILSCASKSMSEGIPWPSSEDMGTARS).

The protein belongs to the G-protein coupled receptor 2 family. Adhesion G-protein coupled receptor (ADGR) subfamily. As to quaternary structure, heterodimer of 2 chains generated by proteolytic processing; the large extracellular N-terminal fragment and the membrane-bound C-terminal fragment predominantly remain associated and non-covalently linked. In terms of processing, autoproteolytically processed at the GPS region of the GAIN-B domain; this cleavage modulates receptor activity.

It is found in the membrane. Its function is as follows. Orphan receptor. In Homo sapiens (Human), this protein is Adhesion G-protein coupled receptor F3 (ADGRF3).